The primary structure comprises 276 residues: Adenylate kinase (276 aa).

Position 50 to 55 (50 to 55 (GAGKGT)) interacts with ATP. The segment at 70–99 (ATGDMLRSQVAKKTPLGREAKKIMDQGGLV) is NMP. AMP-binding positions include Thr71, Arg76, 97-99 (GLV), 126-129 (GFPR), and Gln133. Residues 167-204 (GRLVHPASGRSYHTTFNPPKKAMTDDVTGEPLIQRSDD) form an LID region. Residues Arg168 and 177–178 (SY) contribute to the ATP site. AMP-binding residues include Arg201 and Arg212. ATP is bound at residue Gln240.

This sequence belongs to the adenylate kinase family. AK2 subfamily. In terms of assembly, monomer.

The protein resides in the cytoplasm. It is found in the cytosol. Its subcellular location is the mitochondrion intermembrane space. The catalysed reaction is AMP + ATP = 2 ADP. Its function is as follows. Catalyzes the reversible transfer of the terminal phosphate group between ATP and AMP. Plays an important role in cellular energy homeostasis and in adenine nucleotide metabolism. Adenylate kinase activity is critical for regulation of the phosphate utilization and the AMP de novo biosynthesis pathways. The polypeptide is Adenylate kinase (Pyricularia oryzae (strain 70-15 / ATCC MYA-4617 / FGSC 8958) (Rice blast fungus)).